A 282-amino-acid polypeptide reads, in one-letter code: Glucuronoxylan 4-O-methyltransferase 1 (282 aa).

Residues 13-33 traverse the membrane as a helical segment; the sequence is VLLVFLLATLILIFIVRSTLT.

Belongs to the methyltransferase superfamily. Expressed in rosette leaves, stems, flowers and siliques.

It localises to the golgi apparatus membrane. The catalysed reaction is glucuronoxylan D-glucuronate + n S-adenosyl-L-methionine = glucuronoxylan 4-O-methyl-D-glucuronate + n S-adenosyl-L-homocysteine + n H(+). In terms of biological role, methyltransferase catalyzing 4-O-methylation of glucuronic acid side chains on xylan. The sequence is that of Glucuronoxylan 4-O-methyltransferase 1 (GXM1) from Arabidopsis thaliana (Mouse-ear cress).